We begin with the raw amino-acid sequence, 86 residues long: Defensin-like SRCA-homolog protein (86 aa).

Positions 1-26 (MRCVVLFMVSCLLIVLLINHFEEVEA) are cleaved as a signal peptide. Intrachain disulfides connect C32-C84, C42-C70, C52-C79, and C68-C81.

This sequence belongs to the DEFL family.

The protein resides in the secreted. Functionally, involved in male-mediated self-incompatibility. The sequence is that of Defensin-like SRCA-homolog protein (SCR37) from Arabidopsis lyrata (Lyre-leaved rock-cress).